Consider the following 246-residue polypeptide: Mast cell protease 1 (246 aa).

An N-terminal signal peptide occupies residues Met-1 to Ala-18. Residues Glu-19–Glu-20 constitute a propeptide, activation peptide. Residues Ile-21 to Arg-244 form the Peptidase S1 domain. A disulfide bridge connects residues Cys-50 and Cys-66. Residues His-65 and Asp-109 each act as charge relay system in the active site. 2 disulfides stabilise this stretch: Cys-143/Cys-208 and Cys-174/Cys-187. The Charge relay system role is filled by Ser-202.

It belongs to the peptidase S1 family. Granzyme subfamily.

The sequence is that of Mast cell protease 1 from Meriones unguiculatus (Mongolian jird).